Reading from the N-terminus, the 60-residue chain is MKAIIFLFAVLTVVAIIIPIISGEPNAGPHAASIDLNEIMKKMGPDLLKMLDDIKTKIQG.

An N-terminal signal peptide occupies residues 1–23 (MKAIIFLFAVLTVVAIIIPIISG). The propeptide occupies 24–33 (EPNAGPHAAS). A Glutamine amide modification is found at Q59.

It belongs to the formicidae venom clade 2 family. As to expression, expressed by the venom gland.

It is found in the secreted. Toxin that causes a rapid and irreversible paralysis when intrathoracically injected into insects (blowflies). Does not cause spontaneous nocifensive behaviors by intraplantar injection in mice. The protein is Myrmicitoxin(1)-Pr4b of Pogonomyrmex rugosus (Desert harvester ant).